The primary structure comprises 169 residues: Lipoprotein signal peptidase (169 aa).

The next 2 membrane-spanning stretches (helical) occupy residues 56 to 76 (FLPP…VIIY) and 84 to 104 (QPLF…NLID). Residues Asp113 and Asp139 contribute to the active site. Residues 132-152 (WPIFNIADSAITIGACMLIIF) form a helical membrane-spanning segment.

This sequence belongs to the peptidase A8 family.

It is found in the cell inner membrane. The enzyme catalyses Release of signal peptides from bacterial membrane prolipoproteins. Hydrolyzes -Xaa-Yaa-Zaa-|-(S,diacylglyceryl)Cys-, in which Xaa is hydrophobic (preferably Leu), and Yaa (Ala or Ser) and Zaa (Gly or Ala) have small, neutral side chains.. It functions in the pathway protein modification; lipoprotein biosynthesis (signal peptide cleavage). This protein specifically catalyzes the removal of signal peptides from prolipoproteins. This chain is Lipoprotein signal peptidase, found in Chlorobium phaeovibrioides (strain DSM 265 / 1930) (Prosthecochloris vibrioformis (strain DSM 265)).